Reading from the N-terminus, the 404-residue chain is MTPTQTNTATMQQRWETVMMNNYGTPPIVLASGNGAVVTDVDSNTYLDLLGGIAVNVLGHRHPAVIEAVTHQITTLGHTSNLYATEPSITLAEELVALLGADTQTRVFFCNSGTEANELAFKLSRLTGRTKLVAAQAAFHGRTMGSLALTGQPAKQAAFEPLPGHVTHVPYGQVDALAAAVDNDTAAVFLEPIMGESGVIVPPEGYLAAARDITTRHGALLVIDEVQTGIGRTGAFFAHQHDSITPDVVTLAKGLGGGLPIGAFLATGPAAELLTLGLHGSTFGGNPVCTAAALAVLRVLATQGLVRRAEVLGDSMRIGIESLSHPLIDQVRGRGLLLGIVLTAPRAKDIEKAARDAGFLVNATAPEVIRLAPPLIITESQIDSFITALPGILDASIAELGKKA.

Pyridoxal 5'-phosphate contacts are provided by residues 113-114 and F139; that span reads GT. A N(2)-acetyl-L-ornithine-binding site is contributed by R142. 224–227 serves as a coordination point for pyridoxal 5'-phosphate; the sequence is DEVQ. N6-(pyridoxal phosphate)lysine is present on K253. A N(2)-acetyl-L-ornithine-binding site is contributed by S281. T282 lines the pyridoxal 5'-phosphate pocket.

This sequence belongs to the class-III pyridoxal-phosphate-dependent aminotransferase family. ArgD subfamily. As to quaternary structure, homodimer. It depends on pyridoxal 5'-phosphate as a cofactor.

It is found in the cytoplasm. It carries out the reaction N(2)-acetyl-L-ornithine + 2-oxoglutarate = N-acetyl-L-glutamate 5-semialdehyde + L-glutamate. Its pathway is amino-acid biosynthesis; L-arginine biosynthesis; N(2)-acetyl-L-ornithine from L-glutamate: step 4/4. This chain is Acetylornithine aminotransferase, found in Mycobacterium leprae (strain TN).